We begin with the raw amino-acid sequence, 72 residues long: Translation initiation factor IF-1 (72 aa).

The S1-like domain occupies 1-72 (MAKEDCIEME…TKGRIKFRSK (72 aa)).

Belongs to the IF-1 family. In terms of assembly, component of the 30S ribosomal translation pre-initiation complex which assembles on the 30S ribosome in the order IF-2 and IF-3, IF-1 and N-formylmethionyl-tRNA(fMet); mRNA recruitment can occur at any time during PIC assembly.

The protein localises to the cytoplasm. One of the essential components for the initiation of protein synthesis. Stabilizes the binding of IF-2 and IF-3 on the 30S subunit to which N-formylmethionyl-tRNA(fMet) subsequently binds. Helps modulate mRNA selection, yielding the 30S pre-initiation complex (PIC). Upon addition of the 50S ribosomal subunit IF-1, IF-2 and IF-3 are released leaving the mature 70S translation initiation complex. The chain is Translation initiation factor IF-1 from Francisella tularensis subsp. tularensis (strain FSC 198).